The following is a 547-amino-acid chain: Chaperonin GroEL (547 aa).

Residues 30–33 (TLGP), Lys-51, 87–91 (DGTTT), Gly-415, and Asp-496 contribute to the ATP site. The segment at 528 to 547 (KEEPMPMRGSGMGGMGGMDF) is disordered. Positions 537-547 (SGMGGMGGMDF) are enriched in gly residues.

Belongs to the chaperonin (HSP60) family. In terms of assembly, forms a cylinder of 14 subunits composed of two heptameric rings stacked back-to-back. Interacts with the co-chaperonin GroES.

Its subcellular location is the cytoplasm. The enzyme catalyses ATP + H2O + a folded polypeptide = ADP + phosphate + an unfolded polypeptide.. In terms of biological role, together with its co-chaperonin GroES, plays an essential role in assisting protein folding. The GroEL-GroES system forms a nano-cage that allows encapsulation of the non-native substrate proteins and provides a physical environment optimized to promote and accelerate protein folding. The protein is Chaperonin GroEL of Rickettsia canadensis (strain McKiel).